The primary structure comprises 477 residues: tRNA-2-methylthio-N(6)-dimethylallyladenosine synthase (477 aa).

An MTTase N-terminal domain is found at 13–130; that stretch reads GGLFIKTYGC…LPAMIEEALA (118 aa). Residues Cys-22, Cys-59, Cys-93, Cys-178, Cys-182, and Cys-185 each coordinate [4Fe-4S] cluster. The 233-residue stretch at 164–396 folds into the Radical SAM core domain; sequence ESNGVSAFVS…QAMLNEQTAA (233 aa). In terms of domain architecture, TRAM spans 399–462; that stretch reads EGMVGTTQRV…ANSLKGKLVA (64 aa).

Belongs to the methylthiotransferase family. MiaB subfamily. As to quaternary structure, monomer. [4Fe-4S] cluster is required as a cofactor.

It localises to the cytoplasm. The enzyme catalyses N(6)-dimethylallyladenosine(37) in tRNA + (sulfur carrier)-SH + AH2 + 2 S-adenosyl-L-methionine = 2-methylsulfanyl-N(6)-dimethylallyladenosine(37) in tRNA + (sulfur carrier)-H + 5'-deoxyadenosine + L-methionine + A + S-adenosyl-L-homocysteine + 2 H(+). Its function is as follows. Catalyzes the methylthiolation of N6-(dimethylallyl)adenosine (i(6)A), leading to the formation of 2-methylthio-N6-(dimethylallyl)adenosine (ms(2)i(6)A) at position 37 in tRNAs that read codons beginning with uridine. The sequence is that of tRNA-2-methylthio-N(6)-dimethylallyladenosine synthase from Hydrogenovibrio crunogenus (strain DSM 25203 / XCL-2) (Thiomicrospira crunogena).